We begin with the raw amino-acid sequence, 411 residues long: Na(+)-translocating NADH-quinone reductase subunit F (411 aa).

Residues 5–25 (VILALGIAAFTVIVLVLVAII) traverse the membrane as a helical segment. The 95-residue stretch at 36 to 130 (GDITIDINDD…NMEVELPEEI (95 aa)) folds into the 2Fe-2S ferredoxin-type domain. C73, C79, C82, and C114 together coordinate [2Fe-2S] cluster. The FAD-binding FR-type domain maps to 133-273 (VKKWECTVIS…SGPFGEFFAK (141 aa)).

This sequence belongs to the NqrF family. Composed of six subunits; NqrA, NqrB, NqrC, NqrD, NqrE and NqrF. [2Fe-2S] cluster is required as a cofactor. FAD serves as cofactor.

Its subcellular location is the cell inner membrane. It carries out the reaction a ubiquinone + n Na(+)(in) + NADH + H(+) = a ubiquinol + n Na(+)(out) + NAD(+). Functionally, NQR complex catalyzes the reduction of ubiquinone-1 to ubiquinol by two successive reactions, coupled with the transport of Na(+) ions from the cytoplasm to the periplasm. The first step is catalyzed by NqrF, which accepts electrons from NADH and reduces ubiquinone-1 to ubisemiquinone by a one-electron transfer pathway. The sequence is that of Na(+)-translocating NADH-quinone reductase subunit F from Haemophilus influenzae (strain PittGG).